Reading from the N-terminus, the 650-residue chain is Acetyl-coenzyme A synthetase (650 aa).

Residues 191–194 (RGGR), Thr311, and Asn335 each bind CoA. ATP is bound by residues 387 to 389 (GEP), 411 to 416 (DTWWQT), Asp501, and Arg516. Ser524 contacts CoA. Arg527 contacts ATP. Positions 538, 540, and 543 each coordinate Mg(2+). Position 585 (Arg585) interacts with CoA. Lys610 bears the N6-acetyllysine mark.

This sequence belongs to the ATP-dependent AMP-binding enzyme family. The cofactor is Mg(2+). Post-translationally, acetylated. Deacetylation by the SIR2-homolog deacetylase activates the enzyme.

The enzyme catalyses acetate + ATP + CoA = acetyl-CoA + AMP + diphosphate. Its function is as follows. Catalyzes the conversion of acetate into acetyl-CoA (AcCoA), an essential intermediate at the junction of anabolic and catabolic pathways. AcsA undergoes a two-step reaction. In the first half reaction, AcsA combines acetate with ATP to form acetyl-adenylate (AcAMP) intermediate. In the second half reaction, it can then transfer the acetyl group from AcAMP to the sulfhydryl group of CoA, forming the product AcCoA. The polypeptide is Acetyl-coenzyme A synthetase (Vibrio vulnificus (strain YJ016)).